Reading from the N-terminus, the 188-residue chain is Holliday junction branch migration complex subunit RuvA (188 aa).

The segment at Met-1–Leu-62 is domain I. The tract at residues Glu-63–Ile-135 is domain II. Residues Ile-135–Glu-139 are flexible linker. Residues Pro-140 to Ile-188 form a domain III region.

This sequence belongs to the RuvA family. In terms of assembly, homotetramer. Forms an RuvA(8)-RuvB(12)-Holliday junction (HJ) complex. HJ DNA is sandwiched between 2 RuvA tetramers; dsDNA enters through RuvA and exits via RuvB. An RuvB hexamer assembles on each DNA strand where it exits the tetramer. Each RuvB hexamer is contacted by two RuvA subunits (via domain III) on 2 adjacent RuvB subunits; this complex drives branch migration. In the full resolvosome a probable DNA-RuvA(4)-RuvB(12)-RuvC(2) complex forms which resolves the HJ.

It localises to the cytoplasm. In terms of biological role, the RuvA-RuvB-RuvC complex processes Holliday junction (HJ) DNA during genetic recombination and DNA repair, while the RuvA-RuvB complex plays an important role in the rescue of blocked DNA replication forks via replication fork reversal (RFR). RuvA specifically binds to HJ cruciform DNA, conferring on it an open structure. The RuvB hexamer acts as an ATP-dependent pump, pulling dsDNA into and through the RuvAB complex. HJ branch migration allows RuvC to scan DNA until it finds its consensus sequence, where it cleaves and resolves the cruciform DNA. In Sulfurimonas denitrificans (strain ATCC 33889 / DSM 1251) (Thiomicrospira denitrificans (strain ATCC 33889 / DSM 1251)), this protein is Holliday junction branch migration complex subunit RuvA.